The primary structure comprises 343 residues: 4-hydroxy-2-oxovalerate aldolase 1 (343 aa).

The 253-residue stretch at 8 to 260 (ITVHDMSLRD…ETGVDVFAIS (253 aa)) folds into the Pyruvate carboxyltransferase domain. Residue 16–17 (RD) participates in substrate binding. Asp17 serves as a coordination point for Mn(2+). The active-site Proton acceptor is His20. Residues Ser170 and His199 each coordinate substrate. Positions 199 and 201 each coordinate Mn(2+). A substrate-binding site is contributed by Tyr290.

This sequence belongs to the 4-hydroxy-2-oxovalerate aldolase family.

It carries out the reaction (S)-4-hydroxy-2-oxopentanoate = acetaldehyde + pyruvate. The protein is 4-hydroxy-2-oxovalerate aldolase 1 (bphI) of Burkholderia cenocepacia (strain ATCC BAA-245 / DSM 16553 / LMG 16656 / NCTC 13227 / J2315 / CF5610) (Burkholderia cepacia (strain J2315)).